Here is a 173-residue protein sequence, read N- to C-terminus: Probable glutathione peroxidase 5 (173 aa).

Gly2 carries the N-myristoyl glycine lipid modification. Residue Cys46 is part of the active site.

Belongs to the glutathione peroxidase family. Ubiquitous.

The protein resides in the cell membrane. It catalyses the reaction 2 glutathione + H2O2 = glutathione disulfide + 2 H2O. In terms of biological role, may constitute a glutathione peroxidase-like protective system against oxidative stresses. The polypeptide is Probable glutathione peroxidase 5 (GPX5) (Arabidopsis thaliana (Mouse-ear cress)).